The following is a 273-amino-acid chain: 4-hydroxy-tetrahydrodipicolinate reductase (273 aa).

Residues 12–17 and Glu38 contribute to the NAD(+) site; that span reads GAGGRM. Arg39 contacts NADP(+). Residues 102–104 and 126–129 contribute to the NAD(+) site; these read GTT and AANF. The Proton donor/acceptor role is filled by His159. His160 is a (S)-2,3,4,5-tetrahydrodipicolinate binding site. Lys163 acts as the Proton donor in catalysis. 169–170 is a (S)-2,3,4,5-tetrahydrodipicolinate binding site; sequence GT.

It belongs to the DapB family. In terms of assembly, homotetramer.

The protein resides in the cytoplasm. The catalysed reaction is (S)-2,3,4,5-tetrahydrodipicolinate + NAD(+) + H2O = (2S,4S)-4-hydroxy-2,3,4,5-tetrahydrodipicolinate + NADH + H(+). It carries out the reaction (S)-2,3,4,5-tetrahydrodipicolinate + NADP(+) + H2O = (2S,4S)-4-hydroxy-2,3,4,5-tetrahydrodipicolinate + NADPH + H(+). The protein operates within amino-acid biosynthesis; L-lysine biosynthesis via DAP pathway; (S)-tetrahydrodipicolinate from L-aspartate: step 4/4. Its function is as follows. Catalyzes the conversion of 4-hydroxy-tetrahydrodipicolinate (HTPA) to tetrahydrodipicolinate. This is 4-hydroxy-tetrahydrodipicolinate reductase from Salmonella paratyphi A (strain ATCC 9150 / SARB42).